The primary structure comprises 508 residues: ATP synthase subunit alpha, chloroplastic (508 aa).

170–177 (GDRQTGKT) lines the ATP pocket.

It belongs to the ATPase alpha/beta chains family. F-type ATPases have 2 components, F(1) - the catalytic core - and F(0) - the membrane proton channel. F(1) has five subunits: alpha(3), beta(3), gamma(1), delta(1), epsilon(1). F(0) has four main subunits: a(1), b(1), b'(1) and c(10-14). The alpha and beta chains form an alternating ring which encloses part of the gamma chain. F(1) is attached to F(0) by a central stalk formed by the gamma and epsilon chains, while a peripheral stalk is formed by the delta, b and b' chains.

Its subcellular location is the plastid. The protein localises to the chloroplast thylakoid membrane. It carries out the reaction ATP + H2O + 4 H(+)(in) = ADP + phosphate + 5 H(+)(out). In terms of biological role, f(1)F(0) ATP synthase produces ATP from ADP in the presence of a proton or sodium gradient. F-type ATPases consist of two structural domains, F(1) containing the extramembraneous catalytic core and F(0) containing the membrane proton channel, linked together by a central stalk and a peripheral stalk. During catalysis, ATP synthesis in the catalytic domain of F(1) is coupled via a rotary mechanism of the central stalk subunits to proton translocation. Functionally, the alpha chain is a regulatory subunit. This Chlamydomonas reinhardtii (Chlamydomonas smithii) protein is ATP synthase subunit alpha, chloroplastic.